The sequence spans 151 residues: DNA-directed RNA polymerase RPB6 homolog (151 aa).

Residues 20–44 (ETEEENFVDSEEESEDKSEDKDEIV) show a composition bias toward acidic residues. The tract at residues 20-46 (ETEEENFVDSEEESEDKSEDKDEIVES) is disordered.

This sequence belongs to the archaeal RpoK/eukaryotic RPB6 RNA polymerase subunit family. As to quaternary structure, part of the viral DNA-directed RNA polymerase that consists of 8 polII-like subunits (RPB1, RPB2, RPB3, RPB5, RPB6, RPB7, RPB9, RPB10), a capping enzyme and a termination factor.

Its subcellular location is the host cytoplasm. It is found in the virion. In terms of biological role, component of the DNA-directed RNA polymerase (RNAP) that catalyzes the transcription in the cytoplasm of viral DNA into RNA using the four ribonucleoside triphosphates as substrates. The polypeptide is DNA-directed RNA polymerase RPB6 homolog (African swine fever virus (isolate Tick/Malawi/Lil 20-1/1983) (ASFV)).